Here is a 172-residue protein sequence, read N- to C-terminus: VQ motif-containing protein 17 (172 aa).

Positions 51–60 (FREIVQNLTG) match the VQ motif. Positions 60–97 (GKQDHHHHDLPHQKGLKRNPRSRRSHDHHEVHDMNKSH) are disordered. The segment covering 61-71 (KQDHHHHDLPH) has biased composition (basic and acidic residues). Basic residues predominate over residues 72-85 (QKGLKRNPRSRRSH). The span at 86 to 95 (DHHEVHDMNK) shows a compositional bias: basic and acidic residues.

The protein localises to the nucleus. May function as positive regulator of plant growth. This chain is VQ motif-containing protein 17, found in Arabidopsis thaliana (Mouse-ear cress).